A 256-amino-acid chain; its full sequence is tRNA (guanine-N(1)-)-methyltransferase (256 aa).

Residues Gly-113 and 132–137 (VGDYVL) contribute to the S-adenosyl-L-methionine site.

The protein belongs to the RNA methyltransferase TrmD family. Homodimer.

It localises to the cytoplasm. It catalyses the reaction guanosine(37) in tRNA + S-adenosyl-L-methionine = N(1)-methylguanosine(37) in tRNA + S-adenosyl-L-homocysteine + H(+). In terms of biological role, specifically methylates guanosine-37 in various tRNAs. In Coprothermobacter proteolyticus (strain ATCC 35245 / DSM 5265 / OCM 4 / BT), this protein is tRNA (guanine-N(1)-)-methyltransferase.